A 176-amino-acid chain; its full sequence is MIDDDGYRPNVGIVICNRQGQVMWARRYGQHSWQFPQGGINPGESAEQAMYRELFEEVGLSRKDVRILASTRNWLRYKLPKRLVRWDTKPVCIGQKQKWFLLQLIGNDADINMQTSSTPEFDGWRWVSYWYPVRQVVSFKRDVYRRVMKEFASVTMSLAESAPKPQSAPAYRRKRG.

The Nudix hydrolase domain maps to 6–149; that stretch reads GYRPNVGIVI…KRDVYRRVMK (144 aa). The short motif at 38 to 59 is the Nudix box element; it reads GGINPGESAEQAMYRELFEEVG.

The protein belongs to the Nudix hydrolase family. RppH subfamily. A divalent metal cation is required as a cofactor.

Its function is as follows. Accelerates the degradation of transcripts by removing pyrophosphate from the 5'-end of triphosphorylated RNA, leading to a more labile monophosphorylated state that can stimulate subsequent ribonuclease cleavage. This chain is RNA pyrophosphohydrolase, found in Klebsiella pneumoniae (strain 342).